A 504-amino-acid polypeptide reads, in one-letter code: Tachykinin-like peptides receptor 86C (504 aa).

The Extracellular segment spans residues 1 to 84; sequence MSEIVDTELL…PYELPWEQKT (84 aa). N12, N28, and N36 each carry an N-linked (GlcNAc...) asparagine glycan. Residues 85 to 108 form a helical membrane-spanning segment; sequence IWAIIFGLMMFVAIAGNGIVLWIV. Residues 109–118 are Cytoplasmic-facing; sequence TGHRSMRTVT. The helical transmembrane segment at 119–143 threads the bilayer; the sequence is NYFLLNLSIADLLMSSLNCVFNFIF. The Extracellular portion of the chain corresponds to 144 to 155; the sequence is MLNSDWPFGSIY. The helical transmembrane segment at 156–179 threads the bilayer; sequence CTINNFVANVTVSTSVFTLVAISF. The Cytoplasmic portion of the chain corresponds to 180–199; it reads DRYIAIVHPLKRRTSRRKVR. The helical transmembrane segment at 200–224 threads the bilayer; the sequence is IILVLIWALSCVLSAPCLLYSSIMT. Residues 225 to 250 are Extracellular-facing; that stretch reads KHYYNGKSRTVCFMMWPDGRYPTSMA. Residues 251 to 275 form a helical membrane-spanning segment; sequence DYAYNLIILVLTYGIPMIVMLICYS. The Cytoplasmic segment spans residues 276 to 308; that stretch reads LMGRVLWGSRSIGENTDRQMESMKSKRKVVRMF. Residues 309 to 330 traverse the membrane as a helical segment; sequence IAIVSIFAICWLPYHLFFIYAY. Over 331–343 the chain is Extracellular; sequence HNNQVASTKYVQH. A helical membrane pass occupies residues 344–367; it reads MYLGFYWLAMSNAMVNPLIYYWMN. Residues 368–504 are Cytoplasmic-facing; it reads KRFRMYFQRI…NPVELSPKQM (137 aa). Residues 393-450 are disordered; it reads PKSRLTNKNSSNRHTRAETKSQWKRSTMETQIQQAPVTSSCREQRSAQQQQPPGSGTN. Polar residues-rich tracts occupy residues 395–404 and 416–450; these read SRLTNKNSSN and KRSTMETQIQQAPVTSSCREQRSAQQQQPPGSGTN.

It belongs to the G-protein coupled receptor 1 family. In terms of tissue distribution, expressed in central nervous system, as well as in subsets of neurons in each segment of the developing ventral ganglia.

Its subcellular location is the cell membrane. Its function is as follows. Receptor for tachykinin-like peptides. This Drosophila melanogaster (Fruit fly) protein is Tachykinin-like peptides receptor 86C (TkR86C).